Here is a 103-residue protein sequence, read N- to C-terminus: Truncated secreted TNF-receptor-like protein A53 (103 aa).

The stretch at 36 to 73 (SCDKGEYLDKRHNQCCNRCPPGEFAKVRCNGNDNTKCE) is one TNFR-Cys 1 repeat. 3 disulfide bridges follow: Cys37-Cys50, Cys51-Cys64, and Cys54-Cys72. Residues 74–103 (RCPPHTYTTIPIILMDVINVENAQQDHLIR) form a TNFR-Cys 2; truncated repeat.

Belongs to the poxviridae A53R protein family.

The protein is Truncated secreted TNF-receptor-like protein A53 of Vaccinia virus (strain Copenhagen) (VACV).